Here is a 1082-residue protein sequence, read N- to C-terminus: RNA-directed RNA polymerase (1082 aa).

In terms of domain architecture, RdRp catalytic spans L498–I670.

It belongs to the reoviridae RNA-directed RNA polymerase family. Interacts with VP3 (Potential). Interacts with VP2; this interaction activates VP1. Interacts with NSP5; this interaction is probably necessary for the formation of functional virus factories. Interacts with NSP2; this interaction is weak. The cofactor is Mg(2+).

Its subcellular location is the virion. It carries out the reaction RNA(n) + a ribonucleoside 5'-triphosphate = RNA(n+1) + diphosphate. In terms of biological role, RNA-directed RNA polymerase that is involved in both transcription and genome replication. Together with VP3 capping enzyme, forms an enzyme complex positioned near the channels situated at each of the five-fold vertices of the core. Following infection, the outermost layer of the virus is lost, leaving a double-layered particle (DLP) made up of the core and VP6 shell. VP1 then catalyzes the transcription of fully conservative plus-strand genomic RNAs that are extruded through the DLP's channels into the cytoplasm where they function as mRNAs for translation of viral proteins. One copy of each of the viral (+)RNAs is also recruited during core assembly, together with newly synthesized polymerase complexes and VP2. The polymerase of these novo-formed particles catalyzes the synthesis of complementary minus-strands leading to dsDNA formation. To do so, the polymerase specifically recognizes conserved 3' sequence(s) in plus-strand RNA templates. Once dsRNA synthesis is complete, the polymerase switches to the transcriptional mode, thus providing secondary transcription. In Rotavirus C (strain RVC/Pig/United States/Cowden/1980) (RV-C), this protein is RNA-directed RNA polymerase.